The chain runs to 176 residues: Putative REP-associated tyrosine transposase (176 aa).

Mg(2+) is bound by residues histidine 59 and histidine 61. Tyrosine 148 acts as the Nucleophile in catalysis.

Belongs to the transposase 17 family. RAYT subfamily. In terms of assembly, homodimer. Requires Mg(2+) as cofactor.

Functionally, transposase responsible for transposition an insertion sequence (IS) element. Transposition occurs in 2 main steps, excision from the donor DNA 'top strand' into a single strand circle and its subsequent reinsertion into the DNA target. This increases the copy number of the IS. The protein is Putative REP-associated tyrosine transposase of Haemophilus influenzae (strain ATCC 51907 / DSM 11121 / KW20 / Rd).